Here is a 560-residue protein sequence, read N- to C-terminus: Tudor and KH domain-containing protein (560 aa).

2 KH domains span residues 52-115 and 124-190; these read DIEI…KAAI and PVFE…KHLI. Glycyl lysine isopeptide (Lys-Gly) (interchain with G-Cter in ubiquitin) cross-links involve residues K65, K76, K110, K112, K152, K175, K181, K187, and K193. Residues 211 to 230 form a disordered region; that stretch reads RVPRKQPISVRREEVTEPGG. Residues K256 and K267 each participate in a glycyl lysine isopeptide (Lys-Gly) (interchain with G-Cter in ubiquitin) cross-link. The disordered stretch occupies residues 268-291; sequence EGSWEKPNDDSFQNSGAQSSPETS. Positions 277–290 are enriched in polar residues; sequence DSFQNSGAQSSPET. Phosphoserine is present on S278. The region spanning 353-412 is the Tudor domain; sequence TVHVGDIVAAPLSTNGSWYRARVLGTLENGNLDLYFVDFGDNGDCALKDLRALRSDFLSL. Residues K479, K510, and K529 each participate in a glycyl lysine isopeptide (Lys-Gly) (interchain with G-Cter in ubiquitin) cross-link.

This sequence belongs to the Tdrkh family. As to quaternary structure, interacts with (symmetrically methylated) PIWIL1, PIWIL2 and PIWIL4. Post-translationally, ubiquitinated by PRKN during mitophagy, leading to its degradation and enhancement of mitophagy. Deubiquitinated by USP30. Highly expressed in testis, present at lower level in brain. Weakly or not expressed in other tissues (at protein level).

It is found in the cytoplasm. Its subcellular location is the mitochondrion. Functionally, participates in the primary piRNA biogenesis pathway and is required during spermatogenesis to repress transposable elements and prevent their mobilization, which is essential for the germline integrity. The piRNA metabolic process mediates the repression of transposable elements during meiosis by forming complexes composed of piRNAs and Piwi proteins and govern the methylation and subsequent repression of transposons. Required for the final steps of primary piRNA biogenesis by participating in the processing of 31-37 nt intermediates into mature piRNAs. May act in pi-bodies and piP-bodies by transferring piRNA precursors or intermediates to or between these granules. In Mus musculus (Mouse), this protein is Tudor and KH domain-containing protein (Tdrkh).